Consider the following 144-residue polypeptide: Cytochrome c oxidase subunit 4 isoform 1, mitochondrial (144 aa).

Residues 1 to 73 (SVVKSEDFSL…SFAEMNRGSN (73 aa)) are Mitochondrial matrix-facing. The residue at position 4 (K4) is an N6-acetyllysine; alternate. K4 is subject to N6-succinyllysine; alternate. At K28 the chain carries N6-acetyllysine. Phosphoserine occurs at positions 31 and 33. K35 bears the N6-acetyllysine; alternate mark. K35 is modified (N6-succinyllysine; alternate). K42 bears the N6-acetyllysine mark. The chain crosses the membrane as a helical span at residues 74-99 (EWKTVVGGAMFFIGFTALVIMWQKHY). The Mitochondrial intermembrane segment spans residues 100-144 (VYGPLPQSFDKEWVAKQTKRMLDMKVNPIQGLASKWDYEKNEWKK).

This sequence belongs to the cytochrome c oxidase IV family. Component of the cytochrome c oxidase (complex IV, CIV), a multisubunit enzyme composed of 14 subunits. The complex is composed of a catalytic core of 3 subunits MT-CO1, MT-CO2 and MT-CO3, encoded in the mitochondrial DNA, and 11 supernumerary subunits COX4I, COX5A, COX5B, COX6A, COX6B, COX6C, COX7A, COX7B, COX7C, COX8 and NDUFA4, which are encoded in the nuclear genome. The complex exists as a monomer or a dimer and forms supercomplexes (SCs) in the inner mitochondrial membrane with NADH-ubiquinone oxidoreductase (complex I, CI) and ubiquinol-cytochrome c oxidoreductase (cytochrome b-c1 complex, complex III, CIII), resulting in different assemblies (supercomplex SCI(1)III(2)IV(1) and megacomplex MCI(2)III(2)IV(2)). Interacts with PHB2; the interaction decreases in absence of SPHK2. Interacts with AFG1L. Interacts with ABCB7; this interaction allows the regulation of cellular iron homeostasis and cellular reactive oxygen species (ROS) levels in cardiomyocytes. Interacts with FLVCR2; this interaction occurs in the absence of heme and is disrupted upon heme binding. Interacts with IRGC.

The protein resides in the mitochondrion inner membrane. It participates in energy metabolism; oxidative phosphorylation. Its function is as follows. Component of the cytochrome c oxidase, the last enzyme in the mitochondrial electron transport chain which drives oxidative phosphorylation. The respiratory chain contains 3 multisubunit complexes succinate dehydrogenase (complex II, CII), ubiquinol-cytochrome c oxidoreductase (cytochrome b-c1 complex, complex III, CIII) and cytochrome c oxidase (complex IV, CIV), that cooperate to transfer electrons derived from NADH and succinate to molecular oxygen, creating an electrochemical gradient over the inner membrane that drives transmembrane transport and the ATP synthase. Cytochrome c oxidase is the component of the respiratory chain that catalyzes the reduction of oxygen to water. Electrons originating from reduced cytochrome c in the intermembrane space (IMS) are transferred via the dinuclear copper A center (CU(A)) of subunit 2 and heme A of subunit 1 to the active site in subunit 1, a binuclear center (BNC) formed by heme A3 and copper B (CU(B)). The BNC reduces molecular oxygen to 2 water molecules using 4 electrons from cytochrome c in the IMS and 4 protons from the mitochondrial matrix. The sequence is that of Cytochrome c oxidase subunit 4 isoform 1, mitochondrial (COX4I1) from Gorilla gorilla gorilla (Western lowland gorilla).